We begin with the raw amino-acid sequence, 243 residues long: 1-(5-phosphoribosyl)-5-[(5-phosphoribosylamino)methylideneamino] imidazole-4-carboxamide isomerase (243 aa).

D10 acts as the Proton acceptor in catalysis. D129 acts as the Proton donor in catalysis.

Belongs to the HisA/HisF family.

The protein resides in the cytoplasm. The enzyme catalyses 1-(5-phospho-beta-D-ribosyl)-5-[(5-phospho-beta-D-ribosylamino)methylideneamino]imidazole-4-carboxamide = 5-[(5-phospho-1-deoxy-D-ribulos-1-ylimino)methylamino]-1-(5-phospho-beta-D-ribosyl)imidazole-4-carboxamide. The protein operates within amino-acid biosynthesis; L-histidine biosynthesis; L-histidine from 5-phospho-alpha-D-ribose 1-diphosphate: step 4/9. The protein is 1-(5-phosphoribosyl)-5-[(5-phosphoribosylamino)methylideneamino] imidazole-4-carboxamide isomerase of Saccharopolyspora erythraea (strain ATCC 11635 / DSM 40517 / JCM 4748 / NBRC 13426 / NCIMB 8594 / NRRL 2338).